The chain runs to 573 residues: Acetolactate synthase large subunit (573 aa).

Residue glutamate 51 participates in thiamine diphosphate binding. Residues arginine 153, 261–282 (HGTL…IGVR), and 304–323 (DIDP…IVGN) contribute to the FAD site. The tract at residues 396–476 (QHQMFAALHY…VVIICLNNHF (81 aa)) is thiamine pyrophosphate binding. Mg(2+) contacts are provided by aspartate 447 and asparagine 474.

This sequence belongs to the TPP enzyme family. As to quaternary structure, dimer of large and small chains. Mg(2+) is required as a cofactor. Requires thiamine diphosphate as cofactor.

The enzyme catalyses 2 pyruvate + H(+) = (2S)-2-acetolactate + CO2. It functions in the pathway amino-acid biosynthesis; L-isoleucine biosynthesis; L-isoleucine from 2-oxobutanoate: step 1/4. The protein operates within amino-acid biosynthesis; L-valine biosynthesis; L-valine from pyruvate: step 1/4. The polypeptide is Acetolactate synthase large subunit (ilvI) (Haemophilus influenzae (strain ATCC 51907 / DSM 11121 / KW20 / Rd)).